The primary structure comprises 164 residues: 6,7-dimethyl-8-ribityllumazine synthase (164 aa).

5-amino-6-(D-ribitylamino)uracil is bound by residues phenylalanine 24, 62 to 64, and 86 to 88; these read SFE and AVI. (2S)-2-hydroxy-3-oxobutyl phosphate is bound at residue 91 to 92; the sequence is QT. The active-site Proton donor is histidine 94. Phenylalanine 119 contributes to the 5-amino-6-(D-ribitylamino)uracil binding site. A (2S)-2-hydroxy-3-oxobutyl phosphate-binding site is contributed by arginine 133.

Belongs to the DMRL synthase family.

The enzyme catalyses (2S)-2-hydroxy-3-oxobutyl phosphate + 5-amino-6-(D-ribitylamino)uracil = 6,7-dimethyl-8-(1-D-ribityl)lumazine + phosphate + 2 H2O + H(+). It participates in cofactor biosynthesis; riboflavin biosynthesis; riboflavin from 2-hydroxy-3-oxobutyl phosphate and 5-amino-6-(D-ribitylamino)uracil: step 1/2. Functionally, catalyzes the formation of 6,7-dimethyl-8-ribityllumazine by condensation of 5-amino-6-(D-ribitylamino)uracil with 3,4-dihydroxy-2-butanone 4-phosphate. This is the penultimate step in the biosynthesis of riboflavin. The polypeptide is 6,7-dimethyl-8-ribityllumazine synthase (Synechocystis sp. (strain ATCC 27184 / PCC 6803 / Kazusa)).